Reading from the N-terminus, the 35-residue chain is Kunitz-type proteinase inhibitor AEPI-III (35 aa).

The region spanning 4–35 (CNLPAVVGRCKGYFPRYFYNTEAGKCQRFIYG) is the BPTI/Kunitz inhibitor domain.

It belongs to the venom Kunitz-type family. Sea anemone type 2 potassium channel toxin subfamily.

Its subcellular location is the secreted. The protein localises to the nematocyst. Dual-function toxin that inhibits both the serine protease trypsin and voltage-gated potassium channels (Kv). This Actinia equina (Beadlet anemone) protein is Kunitz-type proteinase inhibitor AEPI-III.